We begin with the raw amino-acid sequence, 100 residues long: Urease subunit gamma (100 aa).

It belongs to the urease gamma subunit family. As to quaternary structure, heterotrimer of UreA (gamma), UreB (beta) and UreC (alpha) subunits. Three heterotrimers associate to form the active enzyme.

Its subcellular location is the cytoplasm. It catalyses the reaction urea + 2 H2O + H(+) = hydrogencarbonate + 2 NH4(+). It functions in the pathway nitrogen metabolism; urea degradation; CO(2) and NH(3) from urea (urease route): step 1/1. In Citrobacter koseri (strain ATCC BAA-895 / CDC 4225-83 / SGSC4696), this protein is Urease subunit gamma.